The sequence spans 357 residues: 3-dehydroquinate synthase (357 aa).

NAD(+) is bound by residues 104–108 (GVVGD), 128–129 (TT), lysine 141, and 168–171 (FLET). Zn(2+)-binding residues include glutamate 183, histidine 243, and histidine 260.

The protein belongs to the sugar phosphate cyclases superfamily. Dehydroquinate synthase family. The cofactor is NAD(+). Co(2+) serves as cofactor. Requires Zn(2+) as cofactor.

It is found in the cytoplasm. It carries out the reaction 7-phospho-2-dehydro-3-deoxy-D-arabino-heptonate = 3-dehydroquinate + phosphate. It functions in the pathway metabolic intermediate biosynthesis; chorismate biosynthesis; chorismate from D-erythrose 4-phosphate and phosphoenolpyruvate: step 2/7. Catalyzes the conversion of 3-deoxy-D-arabino-heptulosonate 7-phosphate (DAHP) to dehydroquinate (DHQ). This is 3-dehydroquinate synthase from Streptococcus pyogenes serotype M3 (strain ATCC BAA-595 / MGAS315).